Here is a 378-residue protein sequence, read N- to C-terminus: Quinolinate synthase (378 aa).

2 residues coordinate iminosuccinate: H59 and S80. C125 contacts [4Fe-4S] cluster. Iminosuccinate contacts are provided by residues 151 to 153 (YAN) and S168. A [4Fe-4S] cluster-binding site is contributed by C212. Iminosuccinate contacts are provided by residues 238 to 240 (HPE) and T255. A [4Fe-4S] cluster-binding site is contributed by C309.

The protein belongs to the quinolinate synthase family. Type 1 subfamily. The cofactor is [4Fe-4S] cluster.

The protein resides in the cytoplasm. The catalysed reaction is iminosuccinate + dihydroxyacetone phosphate = quinolinate + phosphate + 2 H2O + H(+). The protein operates within cofactor biosynthesis; NAD(+) biosynthesis; quinolinate from iminoaspartate: step 1/1. Its function is as follows. Catalyzes the condensation of iminoaspartate with dihydroxyacetone phosphate to form quinolinate. This chain is Quinolinate synthase, found in Burkholderia cenocepacia (strain HI2424).